Consider the following 787-residue polypeptide: Protein smoothened (787 aa).

The signal sequence occupies residues 1 to 27 (MAAARPARGPELPLLGLLLLLLLGDPG). Residues 28–233 (RGAASSGNAT…EAEHQDMHSY (206 aa)) lie on the Extracellular side of the membrane. The tract at residues 30–60 (AASSGNATGPGPRSAGGSARRSAAVTGPPPP) is disordered. Residue N35 is glycosylated (N-linked (GlcNAc...) asparagine). Positions 38-53 (GPGPRSAGGSARRSAA) are enriched in low complexity. Cystine bridges form between C64/C178, C70/C134, C78/C127, C118/C154, and C147/C169. Positions 65–181 (GRAAPCEPLR…DRFPEGCTNE (117 aa)) constitute an FZ domain. D95 is a cholesterol binding site. N-linked (GlcNAc...) asparagine glycosylation occurs at N188. 2 disulfide bridges follow: C193–C213 and C217–C295. The chain crosses the membrane as a helical span at residues 234–254 (IAAFGAVTGLCTLFTLATFVA). Over 255-262 (DWRNSNRY) the chain is Cytoplasmic. Residues 263-283 (PAVILFYVNACFFVGSIGWLA) traverse the membrane as a helical segment. Over 284–314 (QFMDGARREIVCRADGTMRLGEPTSNETLSC) the chain is Extracellular. Residue N309 is glycosylated (N-linked (GlcNAc...) asparagine). An intrachain disulfide couples C314 to C390. Residues 315–335 (VIIFVIVYYALMAGVVWFVVL) form a helical membrane-spanning segment. Over 336 to 358 (TYAWHTSFKALGTTYQPLSGKTS) the chain is Cytoplasmic. A helical membrane pass occupies residues 359 to 379 (YFHLLTWSLPFVLTVAILAVA). Residues 380–402 (QVDGDSVSGICFVGYKNYRYRAG) lie on the Extracellular side of the membrane. Y394 lines the cholesterol pocket. The helical transmembrane segment at 403–423 (FVLAPIGLVLIVGGYFLIRGV) threads the bilayer. The Cytoplasmic segment spans residues 424-451 (MTLFSIKSNHPGLLSEKAASKINETMLR). The chain crosses the membrane as a helical span at residues 452–472 (LGIFGFLAFGFVLITFSCHFY). Residues 473–524 (DFFNQAEWERSFRDYVLCQANVTIGLPTKQPIPDCEIKNRPSLLVEKINLFA) are Extracellular-facing. C490 and C507 are joined by a disulfide. A helical transmembrane segment spans residues 525 to 545 (MFGTGIAMSTWVWTKATLLIW). The interval 538–569 (TKATLLIWRRTWCRLTGQSDDEPKRIKKSKMI) is interaction with BBS5 and BBS7. The Cytoplasmic portion of the chain corresponds to 546–787 (RRTWCRLTGQ…TELMDADSDF (242 aa)). Phosphoserine is present on residues S556, S574, and S590. Residues 570–653 (AKAFSKRHEL…TPVPPEEQAN (84 aa)) form a required for interaction with PRKACA region. The tract at residues 581 to 593 (QNPGQELSFSMHT) is interaction with DLG5. The residue at position 593 (T593) is a Phosphothreonine. Residues S595 and S638 each carry the phosphoserine modification. T640 and T644 each carry phosphothreonine. The residue at position 662 (S662) is a Phosphoserine. The disordered stretch occupies residues 667-704 (KRLGRKKKRRKRKKEVCPLAPPPELHPPAPAPSTIPRL). The span at 668–680 (RLGRKKKRRKRKK) shows a compositional bias: basic residues. A compositionally biased stretch (pro residues) spans 685–699 (LAPPPELHPPAPAPS).

This sequence belongs to the G-protein coupled receptor Fz/Smo family. Homodimer. Interacts (via C-terminus) with protein kinase A catalytic subunit PRKACA; interacts with free PRKACA subunits and the interaction leads to sequestration of PRKACA at the membrane, preventing PRKACA-mediated phosphorylation of GLI transcription factors. Interacts with ARRB2. Interacts with KIF7. Interacts with BBS5 and BBS7; the interactions are indicative for the association of SMO with the BBsome complex to facilitate ciliary localization of SMO. Interacts with DLG5 and SDCBP. Interacts with GAS8/DRC4. In terms of processing, phosphorylation by GRK kinases is required for interaction with protein kinase A catalytic subunit PRKACA.

The protein resides in the cell membrane. Its subcellular location is the cell projection. The protein localises to the cilium. In terms of biological role, g protein-coupled receptor which associates with the patched protein (PTCH) to transduce hedgehog protein signaling. Binding of sonic hedgehog (SHH) to its receptor patched prevents inhibition of smoothened (SMO) by patched. When active, SMO binds to and sequesters protein kinase A catalytic subunit PRKACA at the cell membrane, preventing PRKACA-mediated phosphorylation of GLI transcription factors which releases the GLI proteins from PRKACA-mediated inhibition and allows for transcriptional activation of hedgehog pathway target genes. Required for the accumulation of KIF7, GLI2 and GLI3 in the cilia. Interacts with DLG5 at the ciliary base to induce the accumulation of KIF7 and GLI2 at the ciliary tip for GLI2 activation. The polypeptide is Protein smoothened (SMO) (Homo sapiens (Human)).